A 108-amino-acid chain; its full sequence is Anti-sigma-B factor antagonist (108 aa).

Residues 3-108 (LNIETITHDD…MHVNEGTEVE (106 aa)) form the STAS domain. The residue at position 57 (serine 57) is a Phosphoserine.

It belongs to the anti-sigma-factor antagonist family. In terms of processing, phosphorylated by RsbW on a serine residue.

In terms of biological role, positive regulator of sigma-B activity. Non-phosphorylated RsbV binds to RsbW, preventing its association with sigma-B. When phosphorylated, releases RsbW, which is then free to complex with and inactivate sigma-B. In Staphylococcus epidermidis, this protein is Anti-sigma-B factor antagonist (rsbV).